Consider the following 359-residue polypeptide: 3-dehydroquinate synthase (359 aa).

Residues 70–75 (DGEQYK), 105–109 (GVIGD), 129–130 (TT), Lys142, Lys151, and 169–172 (FYKT) each bind NAD(+). The Zn(2+) site is built by Glu184, His247, and His264.

The protein belongs to the sugar phosphate cyclases superfamily. Dehydroquinate synthase family. The cofactor is Co(2+). Zn(2+) serves as cofactor. Requires NAD(+) as cofactor.

Its subcellular location is the cytoplasm. It catalyses the reaction 7-phospho-2-dehydro-3-deoxy-D-arabino-heptonate = 3-dehydroquinate + phosphate. It functions in the pathway metabolic intermediate biosynthesis; chorismate biosynthesis; chorismate from D-erythrose 4-phosphate and phosphoenolpyruvate: step 2/7. Functionally, catalyzes the conversion of 3-deoxy-D-arabino-heptulosonate 7-phosphate (DAHP) to dehydroquinate (DHQ). This chain is 3-dehydroquinate synthase, found in Francisella tularensis subsp. mediasiatica (strain FSC147).